The sequence spans 150 residues: MKIIARNKKALFDYSIIERFEAGIVLKGSEVVALRAGRANLKDSFVRIIKSEIFLLNSHISLLHTTHSFYKHEERGARKLLMHRKQIDKLLGKVSIEGYTIVALDLYFNTKNKVKATLALAKGKNLHDKRETLKKKQADLEARAAMKNYK.

It belongs to the SmpB family.

It localises to the cytoplasm. Required for rescue of stalled ribosomes mediated by trans-translation. Binds to transfer-messenger RNA (tmRNA), required for stable association of tmRNA with ribosomes. tmRNA and SmpB together mimic tRNA shape, replacing the anticodon stem-loop with SmpB. tmRNA is encoded by the ssrA gene; the 2 termini fold to resemble tRNA(Ala) and it encodes a 'tag peptide', a short internal open reading frame. During trans-translation Ala-aminoacylated tmRNA acts like a tRNA, entering the A-site of stalled ribosomes, displacing the stalled mRNA. The ribosome then switches to translate the ORF on the tmRNA; the nascent peptide is terminated with the 'tag peptide' encoded by the tmRNA and targeted for degradation. The ribosome is freed to recommence translation, which seems to be the essential function of trans-translation. The protein is SsrA-binding protein of Campylobacter jejuni subsp. doylei (strain ATCC BAA-1458 / RM4099 / 269.97).